Reading from the N-terminus, the 365-residue chain is Putative agmatine deiminase (365 aa).

The Amidino-cysteine intermediate role is filled by Cys356.

This sequence belongs to the agmatine deiminase family.

The catalysed reaction is agmatine + H2O = N-carbamoylputrescine + NH4(+). In Latilactobacillus sakei subsp. sakei (strain 23K) (Lactobacillus sakei subsp. sakei), this protein is Putative agmatine deiminase.